Here is a 241-residue protein sequence, read N- to C-terminus: uncharacterized protein (241 aa).

This is an uncharacterized protein from Saccharolobus islandicus (Sulfolobus islandicus).